Consider the following 195-residue polypeptide: A-type ATP synthase subunit E (195 aa).

The protein belongs to the V-ATPase E subunit family. As to quaternary structure, has multiple subunits with at least A(3), B(3), C, D, E, F, H, I and proteolipid K(x).

The protein resides in the cell membrane. Functionally, component of the A-type ATP synthase that produces ATP from ADP in the presence of a proton gradient across the membrane. The sequence is that of A-type ATP synthase subunit E from Halobacterium salinarum (strain ATCC 29341 / DSM 671 / R1).